The chain runs to 408 residues: Zinc finger and SCAN domain-containing protein 1 (408 aa).

Positions 1–34 (MLPRPKAPASPRRPQTPTPSEQDADPGPASPRDT) are disordered. Positions 38-120 (RLRFRQFQYH…SLVEDLTQMC (83 aa)) constitute an SCAN box domain. Disordered stretches follow at residues 136–155 (WSFG…EPSQ), 177–203 (LETT…LLGS), and 215–273 (DEPE…GGTQ). The segment covering 177-187 (LETTQLQQSLH) has biased composition (polar residues). 2 consecutive C2H2-type zinc fingers follow at residues 292-314 (FQCA…QKTH) and 320-342 (FPCP…GKIH). The segment at 344 to 379 (LEPPRKKAPRSKGPRESVPPRDGAQGPVAPRSPKRP) is disordered. A C2H2-type 3 zinc finger spans residues 380–402 (FQCSVCGKAFPWMVHLIDHQKLH).

The protein resides in the nucleus. In terms of biological role, may be involved in transcriptional regulation. The protein is Zinc finger and SCAN domain-containing protein 1 (ZSCAN1) of Homo sapiens (Human).